Here is a 138-residue protein sequence, read N- to C-terminus: Small ribosomal subunit protein uS11c (138 aa).

A disordered region spans residues 1–24; it reads MIKPIPRISSRRNGRIGSRKTGRR. Residues 9-24 are compositionally biased toward basic residues; the sequence is SSRRNGRIGSRKTGRR.

Belongs to the universal ribosomal protein uS11 family. In terms of assembly, part of the 30S ribosomal subunit.

The protein localises to the plastid. Its subcellular location is the chloroplast. The chain is Small ribosomal subunit protein uS11c from Lemna minor (Common duckweed).